Reading from the N-terminus, the 1300-residue chain is Nephrocystin-3 (1300 aa).

Residues 82–183 (KNNEVASMQK…LQRLQAQGIQ (102 aa)) are a coiled coil. TPR repeat units follow at residues 443–476 (TMED…ICEL), 916–949 (ADLY…RETA), 958–991 (AQSL…SENA), 1000–1033 (AREL…RQKS), 1066–1099 (ARTL…RERV), 1108–1141 (AQSI…RRRA), 1150–1183 (AYTV…RQKS), 1192–1225 (ATAL…YEDS), and 1234–1267 (GETL…KETE). The segment at 1268–1288 (TSVLGAKAPSGHSSSGGDTYS) is disordered. A compositionally biased stretch (polar residues) spans 1278–1288 (GHSSSGGDTYS).

It is found in the cell projection. It localises to the cilium. Its function is as follows. Required for normal ciliary development and function. Inhibits disheveled-1-induced canonical Wnt-signaling activity and may also play a role in the control of non-canonical Wnt signaling that regulates planar cell polarity. Probably acts as a molecular switch between different Wnt signaling pathways. Required for proper convergent extension cell movements. The polypeptide is Nephrocystin-3 (nphp3) (Xenopus laevis (African clawed frog)).